Here is a 165-residue protein sequence, read N- to C-terminus: UPF0303 protein Bcenmc03_1534 (165 aa).

The protein belongs to the UPF0303 family.

In Burkholderia orbicola (strain MC0-3), this protein is UPF0303 protein Bcenmc03_1534.